Reading from the N-terminus, the 63-residue chain is Small ribosomal subunit protein bS21 (63 aa).

Residues 40 to 52 (KPSVKRKLKSEAA) show a composition bias toward basic and acidic residues. The interval 40-63 (KPSVKRKLKSEAARKRKNKRGRRY) is disordered. Basic residues predominate over residues 53–63 (RKRKNKRGRRY).

Belongs to the bacterial ribosomal protein bS21 family.

The protein is Small ribosomal subunit protein bS21 of Limosilactobacillus reuteri (strain DSM 20016) (Lactobacillus reuteri).